The following is a 460-amino-acid chain: tRNA modification GTPase MnmE (460 aa).

Positions 24, 81, and 121 each coordinate (6S)-5-formyl-5,6,7,8-tetrahydrofolate. Positions 218–385 (GMVVAIAGPP…LIAAIEDFAA (168 aa)) constitute a TrmE-type G domain. GTP-binding positions include 228–233 (NVGKST), 247–253 (SPHAGTT), and 272–275 (DTAG). 2 residues coordinate Mg(2+): Ser-232 and Thr-253. Lys-460 lines the (6S)-5-formyl-5,6,7,8-tetrahydrofolate pocket.

The protein belongs to the TRAFAC class TrmE-Era-EngA-EngB-Septin-like GTPase superfamily. TrmE GTPase family. Homodimer. Heterotetramer of two MnmE and two MnmG subunits. It depends on K(+) as a cofactor.

It localises to the cytoplasm. Functionally, exhibits a very high intrinsic GTPase hydrolysis rate. Involved in the addition of a carboxymethylaminomethyl (cmnm) group at the wobble position (U34) of certain tRNAs, forming tRNA-cmnm(5)s(2)U34. The protein is tRNA modification GTPase MnmE of Rhodopseudomonas palustris (strain BisB5).